The chain runs to 551 residues: Cleavage and polyadenylation specificity factor subunit 6 (551 aa).

The interval methionine 1–glycine 213 is necessary for interaction with NXF1. In terms of domain architecture, RRM spans isoleucine 81–lysine 161. The segment at isoleucine 81–lysine 161 is necessary for interaction with NUDT21/CPSF5. A necessary for nuclear paraspeckles localization region spans residues isoleucine 81–lysine 161. Threonine 157 carries the post-translational modification Phosphothreonine. A compositionally biased stretch (polar residues) spans methionine 169 to methionine 180. Disordered regions lie at residues methionine 169–glutamate 411 and leucine 477–arginine 551. The short motif at arginine 202–arginine 206 is the GAR element. The segment covering phenylalanine 207 to glycine 219 has biased composition (low complexity). Pro residues-rich tracts occupy residues proline 220–glycine 265, glycine 285–threonine 366, and glycine 377–proline 388. Positions proline 389–threonine 404 are enriched in basic and acidic residues. Phosphothreonine is present on residues threonine 404 and threonine 407. The tract at residues threonine 404–arginine 551 is sufficient for nuclear speckle localization. Residues alanine 405–arginine 551 are necessary for RNA-binding. A necessary for interaction with SRSF3, SRSF7 and TRA2B/SFRS10 region spans residues glutamate 481–arginine 551. Residues serine 489–arginine 503 are compositionally biased toward basic and acidic residues. The tract at residues arginine 490–arginine 551 is arg/Ser-rich domain. 5 positions are modified to phosphoserine: serine 494, serine 500, serine 511, serine 513, and serine 525. The segment covering glutamate 504 to arginine 514 has biased composition (basic residues). The tract at residues lysine 510–arginine 551 is sufficient for nuclear targeting. The span at aspartate 515–arginine 551 shows a compositional bias: basic and acidic residues.

It belongs to the RRM CPSF6/7 family. In terms of assembly, component of the cleavage factor Im (CFIm) complex which is a heterotetramer composed of two subunits of NUDT21/CPSF5 and two subunits of CPSF6 or CPSF7 or a heterodimer of CPSF6 and CPSF7. The cleavage factor Im (CFIm) complex associates with the CPSF and CSTF complexes to promote the assembly of the core mRNA 3'-processing machinery. Associates with the exon junction complex (EJC). Associates with the 80S ribosome particle. Interacts (via the RRM domain) with NUDT21/CPSF5; this interaction is direct and enhances binding to RNA. Interacts (via Arg/Ser-rich domain) with FIP1L1 (preferentially via unphosphorylated form and Arg/Glu/Asp-rich domain); this interaction mediates, at least in part, the interaction between the CFIm and CPSF complexes and may be inhibited by CPSF6 hyper-phosphorylation. Interacts (via N-terminus) with NXF1; this interaction is direct. Interacts with SRSF3. Interacts with SRSF7. Interacts with SNRNP70. Interacts with TRA2B/SFRS10. Interacts with UPF1. Interacts with UPF3B. Interacts with VIRMA. Interacts (via Arg/Ser-rich domain) with TNPO3; promoting nuclear import of CPSF6 independently of its phosphorylation status. Interacts with YTHDC1. Phosphorylated. Phosphorylated in the Arg/Ser-rich domain by SRPK1, in vitro. Post-translationally, symmetrically dimethylated on arginine residues in the GAR motif by PRMT5 in a WDR77- and CLNS1A-dependent manner. Asymmetrically dimethylated on arginine residues in the GAR motif by PRMT1.

Its subcellular location is the nucleus. The protein resides in the nucleoplasm. It is found in the nucleus speckle. It localises to the cytoplasm. Its function is as follows. Component of the cleavage factor Im (CFIm) complex that functions as an activator of the pre-mRNA 3'-end cleavage and polyadenylation processing required for the maturation of pre-mRNA into functional mRNAs. CFIm contributes to the recruitment of multiprotein complexes on specific sequences on the pre-mRNA 3'-end, so called cleavage and polyadenylation signals (pA signals). Most pre-mRNAs contain multiple pA signals, resulting in alternative cleavage and polyadenylation (APA) producing mRNAs with variable 3'-end formation. The CFIm complex acts as a key regulator of cleavage and polyadenylation site choice during APA through its binding to 5'-UGUA-3' elements localized in the 3'-untranslated region (UTR) for a huge number of pre-mRNAs. CPSF6 enhances NUDT21/CPSF5 binding to 5'-UGUA-3' elements localized upstream of pA signals and promotes RNA looping, and hence activates directly the mRNA 3'-processing machinery. Plays a role in mRNA export. The polypeptide is Cleavage and polyadenylation specificity factor subunit 6 (Bos taurus (Bovine)).